A 199-amino-acid chain; its full sequence is Ribonuclease HII (199 aa).

One can recognise an RNase H type-2 domain in the interval 14–199 (GLLAGVDEAG…SFAPVAEVLR (186 aa)). Residues D20, E21, and D112 each contribute to the a divalent metal cation site.

The protein belongs to the RNase HII family. The cofactor is Mn(2+). Requires Mg(2+) as cofactor.

It localises to the cytoplasm. The catalysed reaction is Endonucleolytic cleavage to 5'-phosphomonoester.. Its function is as follows. Endonuclease that specifically degrades the RNA of RNA-DNA hybrids. The protein is Ribonuclease HII of Polaromonas sp. (strain JS666 / ATCC BAA-500).